The primary structure comprises 157 residues: Small ribosomal subunit protein uS7 (157 aa).

Belongs to the universal ribosomal protein uS7 family. Part of the 30S ribosomal subunit. Contacts proteins S9 and S11.

Functionally, one of the primary rRNA binding proteins, it binds directly to 16S rRNA where it nucleates assembly of the head domain of the 30S subunit. Is located at the subunit interface close to the decoding center, probably blocks exit of the E-site tRNA. This Chlamydia abortus (strain DSM 27085 / S26/3) (Chlamydophila abortus) protein is Small ribosomal subunit protein uS7.